The primary structure comprises 477 residues: Small ribosomal subunit protein uS5m (477 aa).

The protein belongs to the universal ribosomal protein uS5 family. As to quaternary structure, component of the mitochondrial small ribosomal subunit (mt-SSU). Mature N.crassa 74S mitochondrial ribosomes consist of a small (37S) and a large (54S) subunit. The 37S small subunit contains a 16S ribosomal RNA (16S mt-rRNA) and 32 different proteins. The 54S large subunit contains a 23S rRNA (23S mt-rRNA) and 42 different proteins. uS3m, uS4m and uS5m form the narrow entry site of the mRNA channel.

It localises to the mitochondrion. Component of the mitochondrial ribosome (mitoribosome), a dedicated translation machinery responsible for the synthesis of mitochondrial genome-encoded proteins, including at least some of the essential transmembrane subunits of the mitochondrial respiratory chain. The mitoribosomes are attached to the mitochondrial inner membrane and translation products are cotranslationally integrated into the membrane. In Neurospora crassa (strain ATCC 24698 / 74-OR23-1A / CBS 708.71 / DSM 1257 / FGSC 987), this protein is Small ribosomal subunit protein uS5m (mrps5).